The following is a 264-amino-acid chain: Small ribosomal subunit protein eS1 (264 aa).

Lys34 bears the N6-acetyllysine; alternate mark. Lys34 is covalently cross-linked (Glycyl lysine isopeptide (Lys-Gly) (interchain with G-Cter in SUMO2); alternate). The residue at position 56 (Lys56) is an N6-acetyllysine. Tyr155 bears the ADP-ribosyltyrosine mark. The interval 232–264 (HGEGGSSGKTTGDETGAKVERADGYEPPVQESV) is disordered. Ser237 carries the post-translational modification Phosphoserine. Over residues 242-255 (TGDETGAKVERADG) the composition is skewed to basic and acidic residues. N6-acetyllysine; alternate is present on Lys249. Lys249 participates in a covalent cross-link: Glycyl lysine isopeptide (Lys-Gly) (interchain with G-Cter in SUMO2); alternate. Tyr256 bears the Phosphotyrosine mark. Ser263 carries the phosphoserine modification.

The protein belongs to the eukaryotic ribosomal protein eS1 family. Component of the small ribosomal subunit. Mature ribosomes consist of a small (40S) and a large (60S) subunit. The 40S subunit contains about 33 different proteins and 1 molecule of RNA (18S). The 60S subunit contains about 49 different proteins and 3 molecules of RNA (28S, 5.8S and 5S). Identified in a IGF2BP1-dependent mRNP granule complex containing untranslated mRNAs. Binds with high affinity to IPO4. Interacts with DDIT3. Part of the small subunit (SSU) processome, composed of more than 70 proteins and the RNA chaperone small nucleolar RNA (snoRNA) U3. Post-translationally, the protein designated S3b has the same amino acid sequence as S3a except that it lacks the C-terminal 12 residues. It is probable that S3a is converted by proteolysis, either physiologically or fortuitously, to S3b. In terms of processing, ADP-ribosylated at Tyr-155 by PARP1 in presence of HPF1.

It localises to the cytoplasm. It is found in the nucleus. The protein localises to the nucleolus. Component of the small ribosomal subunit. The ribosome is a large ribonucleoprotein complex responsible for the synthesis of proteins in the cell. Part of the small subunit (SSU) processome, first precursor of the small eukaryotic ribosomal subunit. During the assembly of the SSU processome in the nucleolus, many ribosome biogenesis factors, an RNA chaperone and ribosomal proteins associate with the nascent pre-rRNA and work in concert to generate RNA folding, modifications, rearrangements and cleavage as well as targeted degradation of pre-ribosomal RNA by the RNA exosome. May play a role during erythropoiesis through regulation of transcription factor DDIT3. This Rattus norvegicus (Rat) protein is Small ribosomal subunit protein eS1 (Rps3a).